The sequence spans 465 residues: BTB/POZ and MATH domain-containing protein 4 (465 aa).

The segment at 12–40 is disordered; sequence LQRQNPLQKSEQQRRNFEMPSPPTTTSLS. An MATH domain is found at 46–180; sequence NGSHSFTIKG…DDCLKINCTV (135 aa). In terms of domain architecture, BTB spans 216–282; sequence SDITFNVSGE…IYKDALIEDA (67 aa). 2 disordered regions span residues 395-429 and 441-465; these read SGGG…INGG and VNAN…ELED. Positions 442-458 are enriched in low complexity; sequence NANGSGRNNNDNNNSDD.

Belongs to the Tdpoz family. In terms of assembly, interacts with RAP2-4. Binds to MYB56 at the promoter of FLOWERING LOCUS T (FT). In terms of tissue distribution, ubiquitous.

It is found in the cytoplasm. It functions in the pathway protein modification; protein ubiquitination. May act as a substrate-specific adapter of an E3 ubiquitin-protein ligase complex (CUL3-RBX1-BTB) which mediates the ubiquitination and subsequent proteasomal degradation of target proteins. The sequence is that of BTB/POZ and MATH domain-containing protein 4 (BPM4) from Arabidopsis thaliana (Mouse-ear cress).